The primary structure comprises 510 residues: Protein HGV2 (510 aa).

The segment at Gly-95–Asp-227 is disordered. Residues Glu-98–Glu-110 are compositionally biased toward acidic residues. 2 stretches are compositionally biased toward basic and acidic residues: residues Gln-111 to Val-129 and Glu-142 to Val-199. The span at Thr-204–Ser-217 shows a compositional bias: low complexity. TPR repeat units lie at residues Ala-260–Leu-293 and Ala-302–Arg-335. Residues Asp-391–Arg-510 form a disordered region. Residues Ala-398–Thr-411 show a composition bias toward low complexity. 2 short sequence motifs (nuclear localization signal) span residues Val-444 to Pro-451 and Ser-465 to Glu-471. Residues Glu-459–Glu-471 are compositionally biased toward basic and acidic residues.

Belongs to the NASP family. In terms of tissue distribution, embryo and larvae.

It is found in the nucleus. In terms of biological role, may function as a nucleosome assembly factor during rapid embryonic cell divisions. The chain is Protein HGV2 (HGV2) from Halocynthia roretzi (Sea squirt).